A 309-amino-acid chain; its full sequence is 2-phospho-L-lactate transferase (309 aa).

The 7,8-didemethyl-8-hydroxy-5-deazariboflavin site is built by Asp-50 and Arg-89.

It belongs to the CofD family. As to quaternary structure, homodimer. Mg(2+) serves as cofactor.

The catalysed reaction is (2S)-lactyl-2-diphospho-5'-guanosine + 7,8-didemethyl-8-hydroxy-5-deazariboflavin = oxidized coenzyme F420-0 + GMP + H(+). It participates in cofactor biosynthesis; coenzyme F420 biosynthesis. Catalyzes the transfer of the 2-phospholactate moiety from (2S)-lactyl-2-diphospho-5'-guanosine to 7,8-didemethyl-8-hydroxy-5-deazariboflavin (FO) with the formation of oxidized coenzyme F420-0 and GMP. This is 2-phospho-L-lactate transferase from Methanococcus maripaludis (strain DSM 14266 / JCM 13030 / NBRC 101832 / S2 / LL).